A 194-amino-acid chain; its full sequence is Accessory gene regulator protein B (194 aa).

5 helical membrane passes run 44–64 (IVVY…LTHL), 80–100 (SSLL…YLII), 107–127 (FVLL…APAA), 142–162 (KILS…TKEP), and 163–183 (VNKL…PIFF).

This sequence belongs to the AgrB family.

Its subcellular location is the cell membrane. Essential for the production of a quorum sensing system signal molecule, the autoinducing peptide (AIP). This quorum sensing system is responsible for the regulation of the expression of virulence factor genes. Involved in the proteolytic processing of AgrD, the precursor of AIP. In Staphylococcus epidermidis, this protein is Accessory gene regulator protein B.